A 152-amino-acid polypeptide reads, in one-letter code: Large-conductance mechanosensitive channel (152 aa).

3 helical membrane-spanning segments follow: residues 26–46 (VLDLAVGVVIGAAFSAIVGSA), 50–70 (ILTPFIGLITGGVDFSNLFIT), and 92–112 (IGVFLNAVIQFLIIAFFIFWL).

The protein belongs to the MscL family. In terms of assembly, homopentamer.

Its subcellular location is the cell inner membrane. In terms of biological role, channel that opens in response to stretch forces in the membrane lipid bilayer. May participate in the regulation of osmotic pressure changes within the cell. The sequence is that of Large-conductance mechanosensitive channel from Gluconobacter oxydans (strain 621H) (Gluconobacter suboxydans).